A 425-amino-acid chain; its full sequence is Histone-binding protein RBBP4-A (425 aa).

Position 2 is an N-acetylalanine (alanine 2). WD repeat units follow at residues 32–125 (YDLV…THDG), 126–175 (EVNR…RLRG), 176–223 (HQKE…KTIF), 225–270 (GHTA…HSVD), 271–314 (AHTA…HSFE), 315–371 (SHKD…FIHG), and 372–404 (GHTA…VWQM).

It belongs to the WD repeat RBAP46/RBAP48/MSI1 family. As to quaternary structure, binds directly to histone H4, probably via helix 1 of the histone fold, a region that is not accessible when histone H4 is in chromatin. Probably forms a large corepressor complex that contains ncor1, sin3a, hdac1-A and/or hdac1-B, hdac2, rbbp4-A and/or rbbp4-B and possibly rbbp7.

It localises to the nucleus. The protein resides in the chromosome. Its subcellular location is the telomere. Functionally, core histone-binding subunit that may target chromatin assembly factors, chromatin remodeling factors and histone deacetylases to their histone substrates in a manner that is regulated by nucleosomal DNA. Component of several complexes which regulate chromatin metabolism. This Xenopus laevis (African clawed frog) protein is Histone-binding protein RBBP4-A (rbbp4-a).